Reading from the N-terminus, the 124-residue chain is KESAAAKFERQHIDSSTSSVSSSNYCNEMMTSRNLTQDRCKPVNTFVHESLADVQAVCSQKNVACKNGQTNCYQSYSAMSITDCRETGNSKYPNCAYQTTQAEKHIIVACEGNPYVPVHYDASV.

Positions 1–13 (KESAAAKFERQHI) are enriched in basic and acidic residues. A disordered region spans residues 1-23 (KESAAAKFERQHIDSSTSSVSSS). Substrate-binding residues include Lys-7 and Arg-10. His-12 serves as the catalytic Proton acceptor. Cystine bridges form between Cys-26-Cys-84, Cys-40-Cys-95, Cys-58-Cys-110, and Cys-65-Cys-72. Asn-34 carries an N-linked (GlcNAc...) asparagine glycan. Residues 41-45 (KPVNT), Lys-66, and Arg-85 each bind substrate. His-119 acts as the Proton donor in catalysis.

This sequence belongs to the pancreatic ribonuclease family. Monomer. Interacts with and forms tight 1:1 complexes with RNH1. Dimerization of two such complexes may occur. Interaction with RNH1 inhibits this protein. In terms of tissue distribution, pancreas.

Its subcellular location is the secreted. The enzyme catalyses an [RNA] containing cytidine + H2O = an [RNA]-3'-cytidine-3'-phosphate + a 5'-hydroxy-ribonucleotide-3'-[RNA].. It catalyses the reaction an [RNA] containing uridine + H2O = an [RNA]-3'-uridine-3'-phosphate + a 5'-hydroxy-ribonucleotide-3'-[RNA].. In terms of biological role, endonuclease that catalyzes the cleavage of RNA on the 3' side of pyrimidine nucleotides. Acts on single-stranded and double-stranded RNA. The protein is Ribonuclease pancreatic (RNASE1) of Giraffa camelopardalis (Giraffe).